A 205-amino-acid chain; its full sequence is MTFPPLKSPLKFYAVVPTADWVGRMVKAGADTVQLRCKALHGDELKREIARCAAACQGSRTQLFINDHWREAIEAGAYGVHLGQEDMDTADLAAIAAAGLRLGLSTHSVAELDRALSVHPSYIASGAIFPTTTKQMPTAPQGLDKLREYVKQAGGTPVVAIGGIDLNNARAVLATGVSSLAAVRAVTEAANPEAVVKAFQALWDG.

4-amino-2-methyl-5-(diphosphooxymethyl)pyrimidine contacts are provided by residues 34 to 38 and N66; that span reads QLRCK. D67 and D86 together coordinate Mg(2+). S105 contributes to the 4-amino-2-methyl-5-(diphosphooxymethyl)pyrimidine binding site. Residue 131–133 coordinates 2-[(2R,5Z)-2-carboxy-4-methylthiazol-5(2H)-ylidene]ethyl phosphate; it reads TTT. K134 provides a ligand contact to 4-amino-2-methyl-5-(diphosphooxymethyl)pyrimidine. G163 contributes to the 2-[(2R,5Z)-2-carboxy-4-methylthiazol-5(2H)-ylidene]ethyl phosphate binding site.

It belongs to the thiamine-phosphate synthase family. Mg(2+) serves as cofactor.

The catalysed reaction is 2-[(2R,5Z)-2-carboxy-4-methylthiazol-5(2H)-ylidene]ethyl phosphate + 4-amino-2-methyl-5-(diphosphooxymethyl)pyrimidine + 2 H(+) = thiamine phosphate + CO2 + diphosphate. It catalyses the reaction 2-(2-carboxy-4-methylthiazol-5-yl)ethyl phosphate + 4-amino-2-methyl-5-(diphosphooxymethyl)pyrimidine + 2 H(+) = thiamine phosphate + CO2 + diphosphate. It carries out the reaction 4-methyl-5-(2-phosphooxyethyl)-thiazole + 4-amino-2-methyl-5-(diphosphooxymethyl)pyrimidine + H(+) = thiamine phosphate + diphosphate. It participates in cofactor biosynthesis; thiamine diphosphate biosynthesis; thiamine phosphate from 4-amino-2-methyl-5-diphosphomethylpyrimidine and 4-methyl-5-(2-phosphoethyl)-thiazole: step 1/1. Its function is as follows. Condenses 4-methyl-5-(beta-hydroxyethyl)thiazole monophosphate (THZ-P) and 2-methyl-4-amino-5-hydroxymethyl pyrimidine pyrophosphate (HMP-PP) to form thiamine monophosphate (TMP). The protein is Thiamine-phosphate synthase of Neisseria meningitidis serogroup B (strain ATCC BAA-335 / MC58).